Reading from the N-terminus, the 359-residue chain is Peptide chain release factor 1 (359 aa).

Gln236 is modified (N5-methylglutamine).

This sequence belongs to the prokaryotic/mitochondrial release factor family. In terms of processing, methylated by PrmC. Methylation increases the termination efficiency of RF1.

Its subcellular location is the cytoplasm. In terms of biological role, peptide chain release factor 1 directs the termination of translation in response to the peptide chain termination codons UAG and UAA. The chain is Peptide chain release factor 1 from Streptococcus pneumoniae serotype 4 (strain ATCC BAA-334 / TIGR4).